Consider the following 180-residue polypeptide: Adenine phosphoribosyltransferase (180 aa).

This sequence belongs to the purine/pyrimidine phosphoribosyltransferase family. In terms of assembly, homodimer.

Its subcellular location is the cytoplasm. The catalysed reaction is AMP + diphosphate = 5-phospho-alpha-D-ribose 1-diphosphate + adenine. Its pathway is purine metabolism; AMP biosynthesis via salvage pathway; AMP from adenine: step 1/1. Its function is as follows. Catalyzes a salvage reaction resulting in the formation of AMP, that is energically less costly than de novo synthesis. The protein is Adenine phosphoribosyltransferase of Mycoplasma genitalium (strain ATCC 33530 / DSM 19775 / NCTC 10195 / G37) (Mycoplasmoides genitalium).